The sequence spans 78 residues: Large ribosomal subunit protein uL29 (78 aa).

The interval 59 to 78 (VESERKRGKSLSSTQTQKEE) is disordered. Over residues 68 to 78 (SLSSTQTQKEE) the composition is skewed to polar residues.

This sequence belongs to the universal ribosomal protein uL29 family.

The polypeptide is Large ribosomal subunit protein uL29 (Synechococcus sp. (strain JA-3-3Ab) (Cyanobacteria bacterium Yellowstone A-Prime)).